Consider the following 1413-residue polypeptide: MKALLDLFKQVSQDEQFDAIKIGLASPEKIRSWSYGEVRKPETINYRTFKPERDGLFCAKIFGPIKDYECLCGKYKRLKHRGVICEKCGVEVTVAKVRRERMGHIELASPVAHIWFLKSLPSRLGMVLDMTLRDIERVLYFEAWCVIEPGMTPLKRGQIMSDDDFLAKTEEYGDDFRALMGAEAVRELLRTIDIDREVETLRGELKATSSEAKIKKISKRLKVLEGFQKSGIKPDWMVMEVLPVLPPDLRPLVPLDGGRFATSDLNDLYRRVINRNNRLKRLLELKAPEIILRNEKRMLQEAVDSLLDNGRRGKAMTGANKRQLKSLADMIKGKSGRFRQNLLGKRVDYSGRSVIVVGPQLKLHQCGLPKLMALELFKPFIFNRLEMMGLATTIKAAKKLVESQEPVVWDILEEVIREHPVMLNRAPTLHRLGIQAFEPVLIEGKAIQLHPLVCAAFNADFDGDQMAVHVPLSLEAQLEARTLMLASNNVLFPANGEPSIVPSQDIVLGLYYTTRERINGRGEGIFFADVAEVQRAYDNGEVELQTRITVRLKEHERDEQGEWQPVIRRHETTVGRALLSEILPRGLPFTVLNKALKKKEISRLINQSFRRCGLRDTVIFADKLMQSGFRLATRGGISIAMEDMLIPAAKEVILAEAGREVKEIDKQYSSGLVTSQERYNNVVDIWGKAGDKVGKAMMEQLATEPVVNRHGENVRQESFNSIYMMADSGARGSAAQIRQLAGMRGLMAKPDGSIIETPITANFREGLNVLQYFISTHGARKGLADTALKTANSGYLTRRLVDVTQDLVITEVDCGTSHGYSMKALVEGGEVIEPLRDRILGRVAAVDIVNPDTQETEITAGTLLDEDLVDLIDRVGVDEVKVRTPLTCETRHGLCAHCYGRDLGRGSHVNVGEAVGVIAAQSIGEPGTQLTMRTFHIGGAASRSALASAVETKSNGTVGFASTMRYVTNAKGERVAISRSGELAIYDDNGRERERHKIPYGATVLVGDGDAVKAGTRLATWDPLTRPIVSEYGGAVRFENIEEGVTVAKQVDEVTGLSTLVVITPKTRGGKVVMRPQIKLVNDNGEDVRIAGTDHAVNISFPVGALITVRDGQQVAVGEVLARIPQESQKTRDITGGLPRVAELFEARSPKDAGMLAEVTGTVSFGKDTKGKQRLVITDLEGISHEFLIPKEKQVLVHDGQVVNKGEMIVDGPADPHDILRLQGIEKLATYIVDEVQDVYRLQGVKINDKHIEVIVRQMLRRVNITDPGDADFIPGEQVERSELLNENDRVIAEDKRPAQYDNVLLGITKASLSTDSFISAASFQETTRVLTEAAIMGKRDDLRGLKENVIVGRLIPAGTGLAYHLARKDKEALEAAEREAARQQANPFEEMPVAADIEVDVSLPFEGETPAE.

Zn(2+)-binding residues include Cys-70, Cys-72, Cys-85, and Cys-88. Residues Asp-460, Asp-462, and Asp-464 each coordinate Mg(2+). Zn(2+) is bound by residues Cys-814, Cys-888, Cys-895, and Cys-898.

It belongs to the RNA polymerase beta' chain family. The RNAP catalytic core consists of 2 alpha, 1 beta, 1 beta' and 1 omega subunit. When a sigma factor is associated with the core the holoenzyme is formed, which can initiate transcription. Mg(2+) serves as cofactor. It depends on Zn(2+) as a cofactor.

The enzyme catalyses RNA(n) + a ribonucleoside 5'-triphosphate = RNA(n+1) + diphosphate. DNA-dependent RNA polymerase catalyzes the transcription of DNA into RNA using the four ribonucleoside triphosphates as substrates. The polypeptide is DNA-directed RNA polymerase subunit beta' (Bordetella avium (strain 197N)).